The following is a 186-amino-acid chain: Ribosome-recycling factor (186 aa).

It belongs to the RRF family.

Its subcellular location is the cytoplasm. In terms of biological role, responsible for the release of ribosomes from messenger RNA at the termination of protein biosynthesis. May increase the efficiency of translation by recycling ribosomes from one round of translation to another. This is Ribosome-recycling factor from Ralstonia pickettii (strain 12J).